Here is a 242-residue protein sequence, read N- to C-terminus: Ethanolamine ammonia-lyase small subunit (242 aa).

Adenosylcob(III)alamin is bound by residues V155 and E176.

It belongs to the EutC family. In terms of assembly, the basic unit is a heterodimer which dimerizes to form tetramers. The heterotetramers trimerize; 6 large subunits form a core ring with 6 small subunits projecting outwards. The cofactor is adenosylcob(III)alamin.

The protein resides in the bacterial microcompartment. The enzyme catalyses ethanolamine = acetaldehyde + NH4(+). Its pathway is amine and polyamine degradation; ethanolamine degradation. Its function is as follows. Catalyzes the deamination of various vicinal amino-alcohols to oxo compounds. Allows this organism to utilize ethanolamine as the sole source of nitrogen and carbon in the presence of external vitamin B12. The protein is Ethanolamine ammonia-lyase small subunit of Clostridium acetobutylicum (strain ATCC 824 / DSM 792 / JCM 1419 / IAM 19013 / LMG 5710 / NBRC 13948 / NRRL B-527 / VKM B-1787 / 2291 / W).